The following is a 177-amino-acid chain: MTKYSTELKIEIVSKYLNHEDSIKGLAKQYNIHWTLIRRWVDKAKCQGLAALSVKHTKTTYSSDFKLNVVRYYLTHSIGVSKVAAKFNISDSQVYNWAKKFNEEGYAGLLPKQKGRPRKVPKKSKKTTKKLELSEKQKYEEKILKQEAELERLRVENLVLKKVAARYPRYPTNKKHN.

Residues Lys-112–Leu-131 form a disordered region. Residues Gln-113–Thr-128 are compositionally biased toward basic residues.

Belongs to the IS150/IS1296 orfA family.

This Lactobacillus johnsonii protein is Insertion element IS1223 uncharacterized 20.7 kDa protein.